The primary structure comprises 196 residues: uncharacterized protein (196 aa).

This is an uncharacterized protein from Mycoplasma genitalium (strain ATCC 33530 / DSM 19775 / NCTC 10195 / G37) (Mycoplasmoides genitalium).